The chain runs to 176 residues: Ubiquinol-cytochrome c reductase iron-sulfur subunit (176 aa).

A helical transmembrane segment spans residues 15–36 (FLFVATGAAAAVGGAAALWPFI). The Rieske domain occupies 87–174 (ARAVNVASLP…YQFVSDTKIQ (88 aa)). [2Fe-2S] cluster is bound by residues cysteine 119, histidine 121, cysteine 138, and histidine 141. A disulfide bond links cysteine 124 and cysteine 140.

The protein belongs to the Rieske iron-sulfur protein family. The main subunits of complex b-c1 are: cytochrome b, cytochrome c1 and the Rieske protein. The cofactor is [2Fe-2S] cluster.

It is found in the cell membrane. It carries out the reaction a quinol + 2 Fe(III)-[cytochrome c](out) = a quinone + 2 Fe(II)-[cytochrome c](out) + 2 H(+)(out). Component of the ubiquinol-cytochrome c reductase complex (complex III or cytochrome b-c1 complex), which is a respiratory chain that generates an electrochemical potential coupled to ATP synthesis. This Bradyrhizobium diazoefficiens (strain JCM 10833 / BCRC 13528 / IAM 13628 / NBRC 14792 / USDA 110) protein is Ubiquinol-cytochrome c reductase iron-sulfur subunit (petA).